Consider the following 563-residue polypeptide: Arginine--tRNA ligase (563 aa).

The 'HIGH' region signature appears at 121 to 131 (PNIAKPFSIGH).

Belongs to the class-I aminoacyl-tRNA synthetase family. Monomer.

It localises to the cytoplasm. It catalyses the reaction tRNA(Arg) + L-arginine + ATP = L-arginyl-tRNA(Arg) + AMP + diphosphate. The polypeptide is Arginine--tRNA ligase (Streptococcus pyogenes serotype M2 (strain MGAS10270)).